Consider the following 130-residue polypeptide: Small ribosomal subunit protein uS9 (130 aa).

It belongs to the universal ribosomal protein uS9 family.

The chain is Small ribosomal subunit protein uS9 from Photorhabdus laumondii subsp. laumondii (strain DSM 15139 / CIP 105565 / TT01) (Photorhabdus luminescens subsp. laumondii).